The following is a 152-amino-acid chain: Membrane-spanning 4-domains subfamily A member 13 (152 aa).

4 helical membrane passes run 1–21, 32–52, 66–86, and 111–131; these read MIGI…MGQI, TYKT…VFLI, TLII…LTII, and ILLF…IYSC.

This sequence belongs to the MS4A family.

It localises to the membrane. Functionally, may be involved in signal transduction as a component of a multimeric receptor complex. This is Membrane-spanning 4-domains subfamily A member 13 (MS4A13) from Homo sapiens (Human).